The following is a 1429-amino-acid chain: Gag-Pol polyprotein (1429 aa).

Gly2 carries N-myristoyl glycine; by host lipidation. The segment at 7–31 (VLSGGKLDKWEKIQLRPGGKKKYRL) is interaction with Gp41. Residues 8–43 (LSGGKLDKWEKIQLRPGGKKKYRLKHLVWASRELER) are interaction with host CALM1. An interaction with host AP3D1 region spans residues 12–19 (KLDKWEKI). The segment at 14-33 (DKWEKIQLRPGGKKKYRLKH) is interaction with membrane phosphatidylinositol 4,5-bisphosphate and RNA. The Nuclear export signal motif lies at 16 to 22 (WEKIQLR). The short motif at 26–32 (KKKYRLK) is the Nuclear localization signal element. The interval 73–77 (EELRS) is interaction with membrane phosphatidylinositol 4,5-bisphosphate. Residues 105–124 (EEEQNRTQQKTQQGKADKGV) are disordered. Residues 110–124 (RTQQKTQQGKADKGV) are compositionally biased toward polar residues. Phosphotyrosine; by host is present on Tyr128. Residues 185-223 (NTVGGHQAAMQMLKDTINEEAAEWDRMHPVQAGPIPPGQ) are interaction with human PPIA/CYPA and NUP153. Positions 273-359 (YSPVSILDIR…GGPGHKARVL (87 aa)) are dimerization/Multimerization of capsid protein p24. 2 CCHC-type zinc fingers span residues 385–402 (IKCFNCGKEGHLARNCRA) and 406–423 (KGCWKCGKEGHQMKDCSE). A disordered region spans residues 439 to 479 (EARKFSSEQTRANSPTSRELWVRGEDNPLSETGNERSGTGS). 2 stretches are compositionally biased toward polar residues: residues 445–455 (SEQTRANSPTS) and 467–479 (LSETGNERSGTGS). Residues 484-488 (PQITL) are dimerization of protease. Residues 503-572 (REALLDTGAD…TPVNIIGRNM (70 aa)) enclose the Peptidase A2 domain. Asp508 functions as the For protease activity; shared with dimeric partner in the catalytic mechanism. Dimerization of protease regions lie at residues 532–538 (GIGGFIK) and 571–583 (NMLTQIGCTLNFP). The 191-residue stretch at 626–816 (EGKISKIGPE…PPFLWMGYEL (191 aa)) folds into the Reverse transcriptase domain. 3 residues coordinate Mg(2+): Asp692, Asp767, and Asp768. An RT 'primer grip' region spans residues 809–817 (FLWMGYELH). A Tryptophan repeat motif motif is present at residues 980–996 (WGTWWTEYWQATWIPEW). Residues 1016–1139 (IVGAETFYVD…VDKLVSSGIR (124 aa)) enclose the RNase H type-1 domain. Mg(2+) is bound by residues Asp1025, Glu1060, Asp1080, and Asp1131. The segment at 1145–1186 (DGIDKAQEEHEKYHNNWRAMASDFNLPPVVAKEIVASCDKCQ) adopts an Integrase-type zinc-finger fold. Residues His1154, His1158, Cys1182, and Cys1185 each contribute to the Zn(2+) site. Positions 1196 to 1346 (VDCSPGIWQL…SAGERIIDII (151 aa)) constitute an Integrase catalytic domain. Mg(2+) is bound by residues Asp1206, Asp1258, and Glu1294. The integrase-type DNA-binding region spans 1365-1411 (FRVYYRDSREPIWKGPAKLLWKGEGAVVIQNSEIKVVPRRKAKIIRD).

As to quaternary structure, homotrimer; further assembles as hexamers of trimers. Interacts with gp41 (via C-terminus). Interacts with host CALM1; this interaction induces a conformational change in the Matrix protein, triggering exposure of the myristate group. Interacts with host AP3D1; this interaction allows the polyprotein trafficking to multivesicular bodies during virus assembly. Part of the pre-integration complex (PIC) which is composed of viral genome, matrix protein, Vpr and integrase. In terms of assembly, homodimer; the homodimer further multimerizes as homohexamers or homopentamers. Interacts with human PPIA/CYPA; This interaction stabilizes the capsid. Interacts with human NUP153. Interacts with host PDZD8; this interaction stabilizes the capsid. Interacts with monkey TRIM5; this interaction destabilizes the capsid. Homodimer, whose active site consists of two apposed aspartic acid residues. As to quaternary structure, heterodimer of p66 RT and p51 RT (RT p66/p51). Heterodimerization of RT is essential for DNA polymerase activity. The overall folding of the subdomains is similar in p66 RT and p51 RT but the spatial arrangements of the subdomains are dramatically different. In terms of assembly, homotetramer; may further associate as a homohexadecamer. Part of the pre-integration complex (PIC) which is composed of viral genome, matrix protein, Vpr and integrase. Interacts with human SMARCB1/INI1 and human PSIP1/LEDGF isoform 1. Interacts with human KPNA3; this interaction might play a role in nuclear import of the pre-integration complex. Interacts with human NUP153; this interaction might play a role in nuclear import of the pre-integration complex. It depends on Mg(2+) as a cofactor. In terms of processing, specific enzymatic cleavages by the viral protease yield mature proteins. The protease is released by autocatalytic cleavage. The polyprotein is cleaved during and after budding, this process is termed maturation. Proteolytic cleavage of p66 RT removes the RNase H domain to yield the p51 RT subunit. Nucleocapsid protein p7 might be further cleaved after virus entry. Tyrosine phosphorylated presumably in the virion by a host kinase. Phosphorylation is apparently not a major regulator of membrane association. Post-translationally, phosphorylated possibly by host MAPK1; this phosphorylation is necessary for Pin1-mediated virion uncoating. In terms of processing, methylated by host PRMT6, impairing its function by reducing RNA annealing and the initiation of reverse transcription.

It is found in the host cell membrane. It localises to the host endosome. The protein localises to the host multivesicular body. The protein resides in the virion membrane. Its subcellular location is the host nucleus. It is found in the host cytoplasm. It localises to the virion. The enzyme catalyses Specific for a P1 residue that is hydrophobic, and P1' variable, but often Pro.. It catalyses the reaction Endohydrolysis of RNA in RNA/DNA hybrids. Three different cleavage modes: 1. sequence-specific internal cleavage of RNA. Human immunodeficiency virus type 1 and Moloney murine leukemia virus enzymes prefer to cleave the RNA strand one nucleotide away from the RNA-DNA junction. 2. RNA 5'-end directed cleavage 13-19 nucleotides from the RNA end. 3. DNA 3'-end directed cleavage 15-20 nucleotides away from the primer terminus.. It carries out the reaction 3'-end directed exonucleolytic cleavage of viral RNA-DNA hybrid.. The catalysed reaction is DNA(n) + a 2'-deoxyribonucleoside 5'-triphosphate = DNA(n+1) + diphosphate. Protease: The viral protease is inhibited by many synthetic protease inhibitors (PIs), such as amprenavir, atazanavir, indinavir, loprinavir, nelfinavir, ritonavir and saquinavir. Use of protease inhibitors in tritherapy regimens permit more ambitious therapeutic strategies. Reverse transcriptase/ribonuclease H: RT can be inhibited either by nucleoside RT inhibitors (NRTIs) or by non nucleoside RT inhibitors (NNRTIs). NRTIs act as chain terminators, whereas NNRTIs inhibit DNA polymerization by binding a small hydrophobic pocket near the RT active site and inducing an allosteric change in this region. Classical NRTIs are abacavir, adefovir (PMEA), didanosine (ddI), lamivudine (3TC), stavudine (d4T), tenofovir (PMPA), zalcitabine (ddC), and zidovudine (AZT). Classical NNRTIs are atevirdine (BHAP U-87201E), delavirdine, efavirenz (DMP-266), emivirine (I-EBU), and nevirapine (BI-RG-587). The tritherapies used as a basic effective treatment of AIDS associate two NRTIs and one NNRTI. Mediates, with Gag polyprotein, the essential events in virion assembly, including binding the plasma membrane, making the protein-protein interactions necessary to create spherical particles, recruiting the viral Env proteins, and packaging the genomic RNA via direct interactions with the RNA packaging sequence (Psi). Gag-Pol polyprotein may regulate its own translation, by the binding genomic RNA in the 5'-UTR. At low concentration, the polyprotein would promote translation, whereas at high concentration, the polyprotein would encapsidate genomic RNA and then shut off translation. Functionally, targets the polyprotein to the plasma membrane via a multipartite membrane-binding signal, that includes its myristoylated N-terminus. Matrix protein is part of the pre-integration complex. Implicated in the release from host cell mediated by Vpu. Binds to RNA. Its function is as follows. Forms the conical core that encapsulates the genomic RNA-nucleocapsid complex in the virion. Most core are conical, with only 7% tubular. The core is constituted by capsid protein hexamer subunits. The core is disassembled soon after virion entry. Host restriction factors such as TRIM5-alpha or TRIMCyp bind retroviral capsids and cause premature capsid disassembly, leading to blocks in reverse transcription. Capsid restriction by TRIM5 is one of the factors which restricts HIV-1 to the human species. Host PIN1 apparently facilitates the virion uncoating. On the other hand, interactions with PDZD8 or CYPA stabilize the capsid. In terms of biological role, encapsulates and protects viral dimeric unspliced genomic RNA (gRNA). Binds these RNAs through its zinc fingers. Acts as a nucleic acid chaperone which is involved in rearangement of nucleic acid secondary structure during gRNA retrotranscription. Also facilitates template switch leading to recombination. As part of the polyprotein, participates in gRNA dimerization, packaging, tRNA incorporation and virion assembly. Aspartyl protease that mediates proteolytic cleavages of Gag and Gag-Pol polyproteins during or shortly after the release of the virion from the plasma membrane. Cleavages take place as an ordered, step-wise cascade to yield mature proteins. This process is called maturation. Displays maximal activity during the budding process just prior to particle release from the cell. Also cleaves Nef and Vif, probably concomitantly with viral structural proteins on maturation of virus particles. Hydrolyzes host EIF4GI and PABP1 in order to shut off the capped cellular mRNA translation. The resulting inhibition of cellular protein synthesis serves to ensure maximal viral gene expression and to evade host immune response. Also mediates cleavage of host YTHDF3. Mediates cleavage of host CARD8, thereby activating the CARD8 inflammasome, leading to the clearance of latent HIV-1 in patient CD4(+) T-cells after viral reactivation; in contrast, HIV-1 can evade CARD8-sensing when its protease remains inactive in infected cells prior to viral budding. Functionally, multifunctional enzyme that converts the viral RNA genome into dsDNA in the cytoplasm, shortly after virus entry into the cell. This enzyme displays a DNA polymerase activity that can copy either DNA or RNA templates, and a ribonuclease H (RNase H) activity that cleaves the RNA strand of RNA-DNA heteroduplexes in a partially processive 3' to 5' endonucleasic mode. Conversion of viral genomic RNA into dsDNA requires many steps. A tRNA(3)-Lys binds to the primer-binding site (PBS) situated at the 5'-end of the viral RNA. RT uses the 3' end of the tRNA primer to perform a short round of RNA-dependent minus-strand DNA synthesis. The reading proceeds through the U5 region and ends after the repeated (R) region which is present at both ends of viral RNA. The portion of the RNA-DNA heteroduplex is digested by the RNase H, resulting in a ssDNA product attached to the tRNA primer. This ssDNA/tRNA hybridizes with the identical R region situated at the 3' end of viral RNA. This template exchange, known as minus-strand DNA strong stop transfer, can be either intra- or intermolecular. RT uses the 3' end of this newly synthesized short ssDNA to perform the RNA-dependent minus-strand DNA synthesis of the whole template. RNase H digests the RNA template except for two polypurine tracts (PPTs) situated at the 5'-end and near the center of the genome. It is not clear if both polymerase and RNase H activities are simultaneous. RNase H probably can proceed both in a polymerase-dependent (RNA cut into small fragments by the same RT performing DNA synthesis) and a polymerase-independent mode (cleavage of remaining RNA fragments by free RTs). Secondly, RT performs DNA-directed plus-strand DNA synthesis using the PPTs that have not been removed by RNase H as primers. PPTs and tRNA primers are then removed by RNase H. The 3' and 5' ssDNA PBS regions hybridize to form a circular dsDNA intermediate. Strand displacement synthesis by RT to the PBS and PPT ends produces a blunt ended, linear dsDNA copy of the viral genome that includes long terminal repeats (LTRs) at both ends. Its function is as follows. Catalyzes viral DNA integration into the host chromosome, by performing a series of DNA cutting and joining reactions. This enzyme activity takes place after virion entry into a cell and reverse transcription of the RNA genome in dsDNA. The first step in the integration process is 3' processing. This step requires a complex comprising the viral genome, matrix protein, Vpr and integrase. This complex is called the pre-integration complex (PIC). The integrase protein removes 2 nucleotides from each 3' end of the viral DNA, leaving recessed CA OH's at the 3' ends. In the second step, the PIC enters cell nucleus. This process is mediated through integrase and Vpr proteins, and allows the virus to infect a non dividing cell. This ability to enter the nucleus is specific of lentiviruses, other retroviruses cannot and rely on cell division to access cell chromosomes. In the third step, termed strand transfer, the integrase protein joins the previously processed 3' ends to the 5' ends of strands of target cellular DNA at the site of integration. The 5'-ends are produced by integrase-catalyzed staggered cuts, 5 bp apart. A Y-shaped, gapped, recombination intermediate results, with the 5'-ends of the viral DNA strands and the 3' ends of target DNA strands remaining unjoined, flanking a gap of 5 bp. The last step is viral DNA integration into host chromosome. This involves host DNA repair synthesis in which the 5 bp gaps between the unjoined strands are filled in and then ligated. Since this process occurs at both cuts flanking the HIV genome, a 5 bp duplication of host DNA is produced at the ends of HIV-1 integration. Alternatively, Integrase may catalyze the excision of viral DNA just after strand transfer, this is termed disintegration. This chain is Gag-Pol polyprotein (gag-pol), found in Homo sapiens (Human).